Consider the following 429-residue polypeptide: Saccharopine dehydrogenase-like oxidoreductase (429 aa).

A2 is subject to N-acetylalanine. Phosphoserine is present on S217.

This sequence belongs to the saccharopine dehydrogenase family.

This chain is Saccharopine dehydrogenase-like oxidoreductase (SCCPDH), found in Pongo abelii (Sumatran orangutan).